A 136-amino-acid polypeptide reads, in one-letter code: 5-hydroxyisourate hydrolase (136 aa).

The signal sequence occupies residues 1–22 (MKRHILATVIASLVAAPAMALA). Residues His31, Arg69, and Tyr133 each contribute to the substrate site.

The protein belongs to the transthyretin family. 5-hydroxyisourate hydrolase subfamily. In terms of assembly, homotetramer.

It is found in the periplasm. The catalysed reaction is 5-hydroxyisourate + H2O = 5-hydroxy-2-oxo-4-ureido-2,5-dihydro-1H-imidazole-5-carboxylate + H(+). Functionally, catalyzes the hydrolysis of 5-hydroxyisourate (HIU) to 2-oxo-4-hydroxy-4-carboxy-5-ureidoimidazoline (OHCU). This Salmonella dublin protein is 5-hydroxyisourate hydrolase (hiuH).